Consider the following 354-residue polypeptide: Release factor glutamine methyltransferase (354 aa).

S-adenosyl-L-methionine is bound by residues 174–178, D197, and N241; that span reads GSGSG. 241 to 244 contributes to the substrate binding site; it reads NPPY.

It belongs to the protein N5-glutamine methyltransferase family. PrmC subfamily.

It carries out the reaction L-glutaminyl-[peptide chain release factor] + S-adenosyl-L-methionine = N(5)-methyl-L-glutaminyl-[peptide chain release factor] + S-adenosyl-L-homocysteine + H(+). Its function is as follows. Methylates the class 1 translation termination release factors RF1/PrfA and RF2/PrfB on the glutamine residue of the universally conserved GGQ motif. This Fusobacterium nucleatum subsp. nucleatum (strain ATCC 25586 / DSM 15643 / BCRC 10681 / CIP 101130 / JCM 8532 / KCTC 2640 / LMG 13131 / VPI 4355) protein is Release factor glutamine methyltransferase.